The sequence spans 953 residues: Glutamate receptor 3.5 (953 aa).

Positions 1–29 are cleaved as a signal peptide; it reads MGFFVMIRDVSMGFMLLCISALWVLPIQG. At 30–606 the chain is on the extracellular side; sequence AGRESFSRNS…SPWSFLKPFT (577 aa). N-linked (GlcNAc...) asparagine glycans are attached at residues Asn-38, Asn-95, Asn-223, Asn-371, Asn-397, Asn-436, Asn-454, and Asn-569. The helical transmembrane segment at 607-627 threads the bilayer; that stretch reads IEMWAVTGALFLFVGAVIWIL. The Cytoplasmic portion of the chain corresponds to 628–636; sequence EHRFNEEFR. Residues 637-657 traverse the membrane as a helical segment; the sequence is GPPRRQIITVFWFSFSTMFFS. Residues 658–668 are Cytoplasmic-facing; it reads HRENTVSTLGR. The helical transmembrane segment at 669–689 threads the bilayer; that stretch reads FVLLVWLFVVLIINSSYTASL. Residues 690-850 are Extracellular-facing; sequence TSILTVQQLT…TENYQISVQS (161 aa). Residues 851–871 traverse the membrane as a helical segment; the sequence is FWGLFLICGVVWFIALTLFCW. Over 872-953 the chain is Cytoplasmic; it reads KVFWQYQRLR…SQSKDHETPQ (82 aa). The tract at residues 928 to 953 is disordered; it reads EKSSKKLKDGQSSAENSQSKDHETPQ.

It belongs to the glutamate-gated ion channel (TC 1.A.10.1) family. In terms of assembly, may form heteromers. In terms of tissue distribution, expressed predominantly in roots. Also detected in shoots.

The protein localises to the membrane. Functionally, glutamate-gated receptor that probably acts as a non-selective cation channel. May be involved in light-signal transduction and calcium homeostasis via the regulation of calcium influx into cells. The sequence is that of Glutamate receptor 3.5 (GLR3.5) from Arabidopsis thaliana (Mouse-ear cress).